The primary structure comprises 1069 residues: Rab GTPase-activating protein 1 (1069 aa).

Residues 1–79 are disordered; sequence MDDKASVGKI…DPPMDDQPGE (79 aa). Residues 7–22 are compositionally biased toward low complexity; it reads VGKISVSSDSVSTLNS. S42 carries the post-translational modification Phosphoserine. The region spanning 142–298 is the PID domain; the sequence is EDSVVFSKLT…IFTFSVSLEI (157 aa). S360 carries the post-translational modification Phosphoserine. The disordered stretch occupies residues 482–527; sequence ERERRKTTASPSVRLPQSGSQSSVIPSPPEDDEEEDNDEPLLSGSG. Polar residues predominate over residues 489–506; sequence TASPSVRLPQSGSQSSVI. Positions 510–520 are enriched in acidic residues; the sequence is PEDDEEEDNDE. The 187-residue stretch at 566–752 folds into the Rab-GAP TBC domain; that stretch reads GVPEALRGEV…HIIDLLLCEG (187 aa). The stretch at 798-1047 forms a coiled coil; the sequence is KKLMELACNM…ALNEVQAAKK (250 aa). T996 is subject to Phosphothreonine.

In terms of assembly, interacts with RAB6A and tubulin gamma.

It is found in the cytoplasm. Its subcellular location is the cytosol. The protein localises to the cytoskeleton. It localises to the microtubule organizing center. The protein resides in the centrosome. In terms of biological role, may act as a GTPase-activating protein of RAB6A. May play a role in microtubule nucleation by centrosome. May participate in a RAB6A-mediated pathway involved in the metaphase-anaphase transition. In Homo sapiens (Human), this protein is Rab GTPase-activating protein 1 (RABGAP1).